A 185-amino-acid polypeptide reads, in one-letter code: Hypoxanthine/guanine phosphoribosyltransferase (185 aa).

It belongs to the purine/pyrimidine phosphoribosyltransferase family. Archaeal HPRT subfamily. In terms of assembly, homodimer.

The protein resides in the cytoplasm. It catalyses the reaction IMP + diphosphate = hypoxanthine + 5-phospho-alpha-D-ribose 1-diphosphate. The catalysed reaction is GMP + diphosphate = guanine + 5-phospho-alpha-D-ribose 1-diphosphate. It functions in the pathway purine metabolism; IMP biosynthesis via salvage pathway; IMP from hypoxanthine: step 1/1. Catalyzes a salvage reaction resulting in the formation of IMP that is energically less costly than de novo synthesis. In Methanococcus maripaludis (strain C7 / ATCC BAA-1331), this protein is Hypoxanthine/guanine phosphoribosyltransferase.